The sequence spans 130 residues: Biotin carboxyl carrier protein (130 aa).

The interval glutamate 20–methionine 64 is disordered. Over residues glutamate 23–lysine 46 the composition is skewed to polar residues. The segment covering glutamine 47 to methionine 64 has biased composition (low complexity). Positions alanine 55–alanine 130 constitute a Biotinyl-binding domain. N6-biotinyllysine is present on lysine 96.

This is Biotin carboxyl carrier protein (bcc) from Streptococcus mutans serotype c (strain ATCC 700610 / UA159).